The chain runs to 349 residues: N-acetyltaurine hydrolase (349 aa).

Residues histidine 26, histidine 28, glutamate 169, histidine 201, histidine 230, and aspartate 298 each coordinate a divalent metal cation.

The protein belongs to the metallo-dependent hydrolases superfamily. Phosphotriesterase family. The cofactor is a divalent metal cation.

Its subcellular location is the cytoplasm. The protein localises to the cytosol. It carries out the reaction N-acetyltaurine + H2O = taurine + acetate. It catalyses the reaction N-propanoyltaurine + H2O = propanoate + taurine. The catalysed reaction is N-acetyl-L-methionine + H2O = L-methionine + acetate. The enzyme catalyses N-acetyl-L-isoleucine + H2O = L-isoleucine + acetate. It carries out the reaction N-acetyl-L-leucine + H2O = L-leucine + acetate. It catalyses the reaction N-acetyl-L-valine + H2O = L-valine + acetate. Its function is as follows. N-acetyltaurine hydrolase that regulates feeding by catalyzing the hydrolysis of N-acetyltaurine into taurine and acetate. N-acetyltaurine has anorexigenic and anti-obesity effects that are dependent on GFRAL receptor and GDF15. PTER also acts on other N-acetyl amino acids (Met, Ile, Leu, Val) and N-propionyltaurine, but at lower rates. This chain is N-acetyltaurine hydrolase (PTER), found in Bos taurus (Bovine).